Reading from the N-terminus, the 161-residue chain is Regulator of ribonuclease activity A (161 aa).

The protein belongs to the RraA family. In terms of assembly, homotrimer. Binds to both RNA-binding sites in the C-terminal region of Rne and to RhlB.

It is found in the cytoplasm. Globally modulates RNA abundance by binding to RNase E (Rne) and regulating its endonucleolytic activity. Can modulate Rne action in a substrate-dependent manner by altering the composition of the degradosome. Modulates RNA-binding and helicase activities of the degradosome. The protein is Regulator of ribonuclease activity A of Idiomarina loihiensis (strain ATCC BAA-735 / DSM 15497 / L2-TR).